The chain runs to 243 residues: ATP synthase subunit a (243 aa).

8 helical membrane passes run 29–49, 54–74, 89–109, 114–134, 141–161, 177–197, 200–220, and 221–241; these read NASLFMVLSTFLISLSCYVGL, VIPNPLQSIIEIIYDFIVSTI, VFTIFTFILVCNLLGILPLGF, HIAVTFAISMIVFISVTFIGF, FLHILLPQGTPMWLAPMMVLI, LAANMIAGHTIIKVIAGFVIN, IFLTPLPIAFIIILIGFEIFV, and AILQAYIFTVLTCVYLSDAVN.

It belongs to the ATPase A chain family. In terms of assembly, F-type ATPases have 2 components, CF(1) - the catalytic core - and CF(0) - the membrane proton channel. CF(1) has five subunits: alpha(3), beta(3), gamma(1), delta(1), epsilon(1). CF(0) has three main subunits: a(1), b(2) and c(9-12). The alpha and beta chains form an alternating ring which encloses part of the gamma chain. CF(1) is attached to CF(0) by a central stalk formed by the gamma and epsilon chains, while a peripheral stalk is formed by the delta and b chains.

It is found in the cell inner membrane. Its function is as follows. Key component of the proton channel; it plays a direct role in the translocation of protons across the membrane. In Ehrlichia ruminantium (strain Welgevonden), this protein is ATP synthase subunit a.